Reading from the N-terminus, the 467-residue chain is UDP-N-acetylmuramate--L-alanine ligase (467 aa).

Residue 114–120 coordinates ATP; it reads GTHGKTT.

The protein belongs to the MurCDEF family.

It is found in the cytoplasm. It carries out the reaction UDP-N-acetyl-alpha-D-muramate + L-alanine + ATP = UDP-N-acetyl-alpha-D-muramoyl-L-alanine + ADP + phosphate + H(+). Its pathway is cell wall biogenesis; peptidoglycan biosynthesis. Cell wall formation. The polypeptide is UDP-N-acetylmuramate--L-alanine ligase (Rhodopseudomonas palustris (strain TIE-1)).